The following is a 500-amino-acid chain: MNYFPWLTIIVFLPISAGSLLFFLPHKGNKLIKWYTICICILELLLTTYAFCYHFRLDDPLIQLAEDYKWINFFDFYWRLGIDGLSIGPILLTGFITTLATLAAWPVTRDSRLFHFLMLAMYSGQIGSFSSRDLLLFFIMWEFELIPVYLLLSMWGGKKRLYSATKFILYTAGGSVFLLIGVLGLGLYGSNEPTLNFETLANQSYPVALEIIFYIGFLIAFAVKSPIIPLHTWLPDTHGEAHYSTCMLLAGILLKMGAYGLVRINMELLPHAHSIFSPWLIIVGTMQIIYAASTSLGQRNLKKRIAYSSVSHMGFIIIGIGSITDTGLNGAILQIISHGFIGAALFFLAGTSYDRMRLVYLDEMGGMAVSIPKIFTMFSILSMASLALPGMSGFVAELIVFFGIITSQKYFLMPKILITFVMAIGMILTPIYSLSMSRQMFYGYKLFNAPSSYFFDSGPRELFVSISIFLPVIGIGIYPDFVLSLSGEKVETILYNYFYR.

The next 14 membrane-spanning stretches (helical) occupy residues 4-24 (FPWL…LFFL), 31-51 (LIKW…TYAF), 87-107 (IGPI…AWPV), 113-130 (LFHF…GSFS), 134-154 (LLLF…LLSM), 167-187 (FILY…GLGL), 208-228 (ALEI…SPII), 242-262 (HYST…YGLV), 272-292 (AHSI…IYAA), 305-325 (IAYS…SITD), 330-350 (GAIL…FLAG), 386-406 (LALP…GIIT), 416-436 (ILIT…SLSM), and 462-482 (LFVS…PDFV).

It belongs to the complex I subunit 4 family.

It localises to the plastid. The protein localises to the chloroplast thylakoid membrane. It catalyses the reaction a plastoquinone + NADH + (n+1) H(+)(in) = a plastoquinol + NAD(+) + n H(+)(out). The enzyme catalyses a plastoquinone + NADPH + (n+1) H(+)(in) = a plastoquinol + NADP(+) + n H(+)(out). This Gossypium barbadense (Sea Island cotton) protein is NAD(P)H-quinone oxidoreductase chain 4, chloroplastic.